The primary structure comprises 60 residues: Large ribosomal subunit protein bL32 (60 aa).

Over residues 1–16 the composition is skewed to basic residues; the sequence is MAVPRRKTSPSRRGMR. A disordered region spans residues 1 to 60; the sequence is MAVPRRKTSPSRRGMRRSADALKRPTYAEDKDSGELRRPHHLDLKTGMYKGRQVIKKKDA. Positions 17–44 are enriched in basic and acidic residues; the sequence is RSADALKRPTYAEDKDSGELRRPHHLDL.

This sequence belongs to the bacterial ribosomal protein bL32 family.

The protein is Large ribosomal subunit protein bL32 of Rhodopseudomonas palustris (strain BisB5).